Consider the following 747-residue polypeptide: MLGKGGVGGGGGTKAPKPSFVSYVRPEEIHTDEKEVTEKEVTLHLLPGEQLLCEASTVLKYVQEDSCQRGVYGRLVCTDFKISFLGDEDSALDNGGEAQFKNKIIGVNDVPLHCVDQIYGVFDEKKKPLFGQLKKYPEKLVIHCKDLRVLHFCLRYTKEEEVKRIVSGIIHHTQSPKLLKRLFLFSYAAAVHGTATDSRNCTVMFDTPKDWCWELERTKGSVKYRTVSVNEGYRVSDRLPAYFVVPTPLPEDDVRRFQGHGIPIWCWSCHNGSALLKMSALPKEQDDGALQVQKSFLDGIYKTIHRPPYEMVKTEDLSSNFLSLQEIQSAYCKFKQLFLIDNSSEFWDTDIKWFSLLESSSWLDIIRRCLKKAIEITECLEAQNVNVLLLEENASDLCCLLSSLVQVMMDAHCRTRTGFQSLIQKEWVMGGHSFLDRCNHLHQSDKEEVPIFLLFLDCVWQLVHQYPPAFEFTETYLTVLSDSLYIPIFSTFFFNSPHQKDTNMGRENLDAQSKPLTLLTVWDWSVQFEPKAQTLLRNPLYVEKPKLDRGQQKGSRFKHQRQLSLPLTQSKSSPKRGFFREETDHLIKNLLGKRISKLINSSDDLQDSSREFYDSWHSKPTDYHGLLLPHIEGPEIKVWAQRYLRWIPEAQILGGGRVATMGKLLEMMEEVQSLQEKIEARHHRQEAVHAEAPGLLRNSVRLSSLFPFALLQRHSAKPVLPTSGWKALGGEDDLAKREDEFVDLGDV.

In terms of domain architecture, Myotubularin phosphatase spans 205–643; sequence FDTPKDWCWE…PEIKVWAQRY (439 aa). Residues 449 to 558 are interaction with MTM1; it reads VPIFLLFLDC…RGQQKGSRFK (110 aa). The segment at 548–575 is disordered; the sequence is DRGQQKGSRFKHQRQLSLPLTQSKSSPK. Positions 562–572 are enriched in polar residues; the sequence is QLSLPLTQSKS. Ser564 and Ser601 each carry phosphoserine.

It belongs to the protein-tyrosine phosphatase family. Non-receptor class myotubularin subfamily. In terms of assembly, heterodimer with lipid phosphatase MTM1. Heterodimer with lipid phosphatase MTMR2. Expressed in skeletal muscles (at protein level).

The protein resides in the cytoplasm. The protein localises to the sarcoplasmic reticulum. It is found in the myofibril. Its subcellular location is the sarcomere. In terms of biological role, acts as an adapter for the myotubularin-related phosphatases. Regulates phosphatase MTM1 protein stability and possibly its intracellular location. By stabilizing MTM1 protein levels, required for skeletal muscle maintenance but not for myogenesis. This chain is Myotubularin-related protein 12 (Mtmr12), found in Mus musculus (Mouse).